The chain runs to 447 residues: T-box transcription factor TBX20 (447 aa).

Positions 62-81 are disordered; the sequence is DAHGEFGGGSGSSPSSSSLC. The T-box DNA-binding region spans 109–288; sequence LWDKFHELGT…SNPFAKGFRD (180 aa). A disordered region spans residues 316-340; it reads TYGGEEDVLGDESQTTPNRGSAFTT. A compositionally biased stretch (polar residues) spans 327-340; sequence ESQTTPNRGSAFTT.

The protein resides in the nucleus. Acts as a transcriptional activator and repressor required for cardiac development and may have key roles in the maintenance of functional and structural phenotypes in adult heart. The chain is T-box transcription factor TBX20 (TBX20) from Homo sapiens (Human).